Consider the following 199-residue polypeptide: Transgelin-3 (199 aa).

The Calponin-homology (CH) domain occupies 24–136; the sequence is ADLENKLVDW…RTLMALGSVA (113 aa). A Phosphoserine modification is found at Ser163. Residues 174–199 form a Calponin-like repeat; the sequence is IGLQMGSNKGASQAGMTGYGMPRQIM. Polar residues predominate over residues 176–188; the sequence is LQMGSNKGASQAG. The disordered stretch occupies residues 176–199; that stretch reads LQMGSNKGASQAGMTGYGMPRQIM.

The protein belongs to the calponin family. Widely expressed in the brain. Expression is increased in the superior frontal cortex of alcoholics, but not in the motor cortex or cerebellum.

The polypeptide is Transgelin-3 (TAGLN3) (Homo sapiens (Human)).